A 325-amino-acid polypeptide reads, in one-letter code: Elongation factor P--(R)-beta-lysine ligase (325 aa).

Position 76–78 (76–78) interacts with substrate; it reads SPE. Residues 100 to 102 and asparagine 109 each bind ATP; that span reads RNE. Tyrosine 118 is a substrate binding site. 244 to 245 lines the ATP pocket; it reads EL. Residue glutamate 251 coordinates substrate. Position 300 (glycine 300) interacts with ATP.

The protein belongs to the class-II aminoacyl-tRNA synthetase family. EpmA subfamily. Homodimer.

It carries out the reaction D-beta-lysine + L-lysyl-[protein] + ATP = N(6)-((3R)-3,6-diaminohexanoyl)-L-lysyl-[protein] + AMP + diphosphate + H(+). With EpmB is involved in the beta-lysylation step of the post-translational modification of translation elongation factor P (EF-P). Catalyzes the ATP-dependent activation of (R)-beta-lysine produced by EpmB, forming a lysyl-adenylate, from which the beta-lysyl moiety is then transferred to the epsilon-amino group of a conserved specific lysine residue in EF-P. The protein is Elongation factor P--(R)-beta-lysine ligase of Klebsiella pneumoniae (strain 342).